The primary structure comprises 158 residues: Cyclic pyranopterin monophosphate synthase (158 aa).

Substrate contacts are provided by residues 74 to 76 (MCH) and 112 to 113 (ME). The active site involves aspartate 127.

This sequence belongs to the MoaC family. As to quaternary structure, homohexamer; trimer of dimers.

The catalysed reaction is (8S)-3',8-cyclo-7,8-dihydroguanosine 5'-triphosphate = cyclic pyranopterin phosphate + diphosphate. Its pathway is cofactor biosynthesis; molybdopterin biosynthesis. Its function is as follows. Catalyzes the conversion of (8S)-3',8-cyclo-7,8-dihydroguanosine 5'-triphosphate to cyclic pyranopterin monophosphate (cPMP). The protein is Cyclic pyranopterin monophosphate synthase of Thermoanaerobacter sp. (strain X514).